A 127-amino-acid polypeptide reads, in one-letter code: Histone H2B type 1-A (127 aa).

The segment at 1–32 (MPEVSAKGTTISKKGFKKAVTKTQKKEGRKRK) is disordered. At proline 2 the chain carries N-acetylproline. Residues lysine 7, lysine 13, lysine 14, lysine 17, lysine 18, lysine 22, and lysine 25 each carry the N6-acetyllysine; alternate modification. N6-crotonyllysine; alternate occurs at positions 7, 13, 14, 17, 18, 22, 25, and 36. Lysine 7 and lysine 13 each carry N6-lactoyllysine; alternate. A Glycyl lysine isopeptide (Lys-Gly) (interchain with G-Cter in SUMO2); alternate cross-link involves residue lysine 7. N6-lactoyllysine; alternate occurs at positions 17, 18, 22, and 25. Lysine 22 is covalently cross-linked (Glycyl lysine isopeptide (Lys-Gly) (interchain with G-Cter in SUMO2); alternate). At lysine 36 the chain carries N6-succinyllysine; alternate. Lysine 36 participates in a covalent cross-link: Glycyl lysine isopeptide (Lys-Gly) (interchain with G-Cter in ubiquitin); alternate. Position 38 is a phosphoserine (serine 38). Lysine 45 carries the post-translational modification N6-lactoyllysine; alternate. Residue lysine 48 is modified to N6-methyllysine. N6,N6-dimethyllysine is present on lysine 59. Arginine 81 carries the dimethylated arginine modification. Lysine 87 carries the N6-acetyllysine; alternate modification. Lysine 87 carries the N6-lactoyllysine; alternate modification. Lysine 87 carries the post-translational modification N6,N6,N6-trimethyllysine; alternate. Omega-N-methylarginine occurs at positions 88 and 94. Position 110 is an N6-lactoyllysine; alternate (lysine 110). The residue at position 110 (lysine 110) is an N6-methyllysine. Residue threonine 117 is modified to Phosphothreonine. An N6-lactoyllysine; alternate mark is found at lysine 118 and lysine 122. An N6-succinyllysine; alternate mark is found at lysine 118 and lysine 122. Lysine 118 carries the post-translational modification N6-methylated lysine; alternate. Lysine 122 is covalently cross-linked (Glycyl lysine isopeptide (Lys-Gly) (interchain with G-Cter in ubiquitin); alternate).

This sequence belongs to the histone H2B family. In terms of assembly, the nucleosome is a histone octamer containing two molecules each of H2A, H2B, H3 and H4 assembled in one H3-H4 heterotetramer and two H2A-H2B heterodimers. Post-translationally, monoubiquitination at Lys-36 by the MSL1/MSL2 dimer is required for histone H3 'Lys-4' (H3K4me) and 'Lys-79' (H3K79me) methylation and transcription activation at specific gene loci, such as HOXA9 and MEIS1 loci. Similarly, monoubiquitination of Lys-122 (H2BK120Ub) by the RNF20/40 complex gives a specific tag for epigenetic transcriptional activation and is also prerequisite for histone H3 'Lys-4' and 'Lys-79' methylation. It also functions cooperatively with the FACT dimer to stimulate elongation by RNA polymerase II. H2BK120Ub also acts as a regulator of mRNA splicing: deubiquitination by USP49 is required for efficient cotranscriptional splicing of a large set of exons. In terms of processing, crotonylation (Kcr) is specifically present in male germ cells and marks testis-specific genes in post-meiotic cells, including X-linked genes that escape sex chromosome inactivation in haploid cells. Crotonylation marks active promoters and enhancers and confers resistance to transcriptional repressors. It is also associated with post-meiotically activated genes on autosomes. Acetylated during spermatogenesis. Acetylated form is most abundant in spermatogonia compared to spermatocytes and round spermatids. Post-translationally, phosphorylated at Thr-117 in spermatogonia, spermatocytes and round spermatids. In terms of processing, methylated at Lys-118 in spermatogonia, spermatocytes and round spermatids. Lactylated in macrophages by EP300/P300 by using lactoyl-CoA directly derived from endogenous or exogenous lactate, leading to stimulates gene transcription. In terms of tissue distribution, testis. Expressed in pachytene spermatocytes during meiotic prophase I in the absence of any significant DNA synthesis.

Its subcellular location is the nucleus. The protein resides in the chromosome. Functionally, variant histone specifically required to direct the transformation of dissociating nucleosomes to protamine in male germ cells. Entirely replaces classical histone H2B prior nucleosome to protamine transition and probably acts as a nucleosome dissociating factor that creates a more dynamic chromatin, facilitating the large-scale exchange of histones. Core component of nucleosome. Nucleosomes wrap and compact DNA into chromatin, limiting DNA accessibility to the cellular machineries which require DNA as a template. Histones thereby play a central role in transcription regulation, DNA repair, DNA replication and chromosomal stability. DNA accessibility is regulated via a complex set of post-translational modifications of histones, also called histone code, and nucleosome remodeling. This chain is Histone H2B type 1-A, found in Rattus norvegicus (Rat).